Consider the following 375-residue polypeptide: Fructose-1,6-bisphosphate aldolase/phosphatase (375 aa).

The Proton acceptor; for FBP phosphatase activity role is filled by aspartate 15. Positions 15, 22, 56, and 57 each coordinate Mg(2+). Beta-D-fructose 1,6-bisphosphate is bound at residue histidine 22. Residue histidine 22 coordinates dihydroxyacetone phosphate. Position 94 (tyrosine 94) interacts with beta-D-fructose 1,6-bisphosphate. Glutamine 98 contributes to the Mg(2+) binding site. 107-108 contributes to the beta-D-fructose 1,6-bisphosphate binding site; the sequence is GN. Residue aspartate 135 coordinates Mg(2+). Lysine 136 lines the beta-D-fructose 1,6-bisphosphate pocket. Residue lysine 136 coordinates dihydroxyacetone phosphate. Tyrosine 237 functions as the Proton donor/acceptor; for FBP aldolase activity in the catalytic mechanism. Mg(2+) is bound by residues lysine 240, aspartate 241, and aspartate 242. Residue lysine 240 is the Schiff-base intermediate with DHAP; for FBP aldolase activity of the active site. Residues 250–251, arginine 274, aspartate 295, and tyrosine 357 each bind beta-D-fructose 1,6-bisphosphate; that span reads QS. Residues arginine 274 and aspartate 295 each contribute to the dihydroxyacetone phosphate site.

This sequence belongs to the FBP aldolase/phosphatase family. Homooctamer; dimer of tetramers. Requires Mg(2+) as cofactor.

The catalysed reaction is beta-D-fructose 1,6-bisphosphate = D-glyceraldehyde 3-phosphate + dihydroxyacetone phosphate. The enzyme catalyses beta-D-fructose 1,6-bisphosphate + H2O = beta-D-fructose 6-phosphate + phosphate. It functions in the pathway carbohydrate biosynthesis; gluconeogenesis. Its activity is regulated as follows. FBPase activity is inhibited by Ca(2+), ATP, ADP and phosphoenolpyruvate. Its function is as follows. Catalyzes two subsequent steps in gluconeogenesis: the aldol condensation of dihydroxyacetone phosphate (DHAP) and glyceraldehyde-3-phosphate (GA3P) to fructose-1,6-bisphosphate (FBP), and the dephosphorylation of FBP to fructose-6-phosphate (F6P). Can also dephosphorylate, with lower activity, other related substrates including fructose-1-phosphate, fructose-6-phosphate, glucose-1-phosphate, glucose-6-phosphate, glycerol-2-phosphate, phosphoenolpyruvate, 5'-AMP, 6'-ADP and 7'-ATP. In Thermococcus onnurineus (strain NA1), this protein is Fructose-1,6-bisphosphate aldolase/phosphatase.